The primary structure comprises 382 residues: ATP phosphoribosyltransferase regulatory subunit (382 aa).

This sequence belongs to the class-II aminoacyl-tRNA synthetase family. HisZ subfamily. In terms of assembly, heteromultimer composed of HisG and HisZ subunits.

Its subcellular location is the cytoplasm. The protein operates within amino-acid biosynthesis; L-histidine biosynthesis; L-histidine from 5-phospho-alpha-D-ribose 1-diphosphate: step 1/9. Functionally, required for the first step of histidine biosynthesis. May allow the feedback regulation of ATP phosphoribosyltransferase activity by histidine. This is ATP phosphoribosyltransferase regulatory subunit from Lacticaseibacillus paracasei (strain ATCC 334 / BCRC 17002 / CCUG 31169 / CIP 107868 / KCTC 3260 / NRRL B-441) (Lactobacillus paracasei).